Reading from the N-terminus, the 149-residue chain is 3-hydroxyacyl-[acyl-carrier-protein] dehydratase FabZ (149 aa).

Residue His-50 is part of the active site.

It belongs to the thioester dehydratase family. FabZ subfamily.

Its subcellular location is the cytoplasm. It carries out the reaction a (3R)-hydroxyacyl-[ACP] = a (2E)-enoyl-[ACP] + H2O. In terms of biological role, involved in unsaturated fatty acids biosynthesis. Catalyzes the dehydration of short chain beta-hydroxyacyl-ACPs and long chain saturated and unsaturated beta-hydroxyacyl-ACPs. This Pediococcus pentosaceus (strain ATCC 25745 / CCUG 21536 / LMG 10740 / 183-1w) protein is 3-hydroxyacyl-[acyl-carrier-protein] dehydratase FabZ.